The primary structure comprises 262 residues: Cyclin-dependent kinase inhibitor 1 (262 aa).

The tract at residues 140–212 is disordered; it reads SDVAEAGSEH…SAQQATRPKI (73 aa). Residues 160-169 are compositionally biased toward basic and acidic residues; that stretch reads SGRDRERRET. Residues 198 to 208 show a composition bias toward low complexity; it reads SAATASAQQAT.

The protein belongs to the CDI family. ICK/KRP subfamily. Expressed in roots, stems, leaves and apex.

Its function is as follows. Regulates the production of endosperm cells, affecting seed filling and embryo development. Regulates endoreduplication of endosperm cells. May play a role in the exit from the mitotic cell cycle during rice grain formation. Inhibitis leaf elongation rates by decreasing cell number, that is partly compensated by increased cell size. May not affect growth rate or cell size of the primary root. In Oryza sativa subsp. japonica (Rice), this protein is Cyclin-dependent kinase inhibitor 1 (KRP1).